The chain runs to 455 residues: E3 ubiquitin-protein ligase IPI1 (455 aa).

Positions 1–42 (MGAEEEEEPASAVGREGGGGGGGARAAGAGAGGDTADDDDSG) are disordered. Residues 15–33 (REGGGGGGGARAAGAGAGG) are compositionally biased toward gly residues. The segment at 51-97 (CSICLDAVVAGGGDRSTARLQCGHEFHLDCIGSAFNAKGVMQCPNCR) adopts an RING-type; atypical zinc-finger fold. Disordered regions lie at residues 286-311 (LDSD…SRIP) and 426-455 (QWIG…IPRM). Over residues 433 to 442 (SPPPPPPPPA) the composition is skewed to pro residues.

In terms of assembly, interacts with SPL14/IPA1.

The protein localises to the nucleus. It carries out the reaction S-ubiquitinyl-[E2 ubiquitin-conjugating enzyme]-L-cysteine + [acceptor protein]-L-lysine = [E2 ubiquitin-conjugating enzyme]-L-cysteine + N(6)-ubiquitinyl-[acceptor protein]-L-lysine.. It participates in protein modification; protein ubiquitination. Its function is as follows. Functions as an E3 ligase that promotes polyubiquitination of SPL14/IPA1 for subsequent proteasomal degradation. Regulates plant architecture by modulating SPL14/IPA1 abundance. Promotes the degradation of SPL14/IPA1 in panicles, while it stabilizes SPL14/IPA1 in shoot apices. Ubiquitinates the SPL14/IPA1-mediated complex with 'Lys-48'-linked polyubiquitin in panicles and 'Lys-63'-linked polyubiquitin chains in the shoot apex. The protein is E3 ubiquitin-protein ligase IPI1 of Oryza sativa subsp. japonica (Rice).